The following is a 2126-amino-acid chain: MGLGSAASGTGADRGAWTLAEPRVTPVAVIGMACRLPGGIDSPELLWKALLRGDDLITEVPPDRWDCDEFYDPQPGVPGRTVCKWGGFLDNPADFDCEFFGIGEREAIAIDPQQRLLLETSWEAMEHAGLTQQTLAGSATGVFAGVTHGDYTMVAADAKQLEEPYGYLGNSFSMASGRVAYAMRLHGPAITVDTACSSGLTAVHMACRSLHEGESDVALAGGVALMLEPRKAAAGSALGMLSPTGRCRAFDVAADGFVSGEGCAVVVLKRLPDALADGDRILAVIRGTSANQDGHTVNIATPSQPAQVAAYRAALAAGGVDAATVGMVEAHGPGTPIGDPIEYASVSEVYGVDGPCALASVKTNFGHTQSTAGVLGLIKVVLALKHGVVPRNLHFTRLPDEIAGITTNLFVPEVTTPWPTNGRQVPRRAAVSSYGFSGTNVHAVVEQAPQTEAQPHAASTPPTGTPALFTLSASSADALRQTAQRLTDWIQQHADSLVLSDLAYTLARRRTHRSVRTAVIASSVDELIAGLGEVADGDTVYQPAVGQDDRGPVWLFSGQGSQWAAMGADLLTNESVFAATVAELEPLIAAESGFSVTEAMTAPETVTGIDRVQPTIFAMQVALAATMAAYGVRPGAVIGHSMGESAAAVVAGVLSAEDGVRVICRRSKLMATIAGSAAMASVELPALAVQSELTALGIDDVVVAVVTAPQSTVIAGGTESVRKLVDIWERRDVLARAVAVDVASHSPQVDPILDELIAALADLNPKAPEIPYYSATLFDPREAPACDARYWADNLRHTVRFSAAVRSALDDGYRVFAELSPHPLLTHAGDQIAGSVGMPVAALAGMRREQPLPLGLRRLLTDLHNAGAAVDFSVLCPQGRLVDAPLPAWSHRFLFYDREGVDNRSPGGSTVAVHPLLGAHVRLPEEPERHAWQADVGTATLPWLGDHRIHNVAALPGAAYCEMALSAARAVLGEQSEVRDMRFEAMLLLDDQTPVSTVATVTSPGVVDFAVEALQEGVGHHLRRASAVLQQVSGECEPPAYDMASLLEAHPCRVDGEDLRRQFDKHGVQYGPAFTGLAVAYVAEDATATMLAEVALPGSIRSQQGLYAIHPALLDACFQSVGAHPDSQSVGSGLLVPLGVRRVRAYAPVRTARYCYTRVTKVELVGVEADIDVLDAHGTVLLAVCGLRIGTGVSERDKHNRVLNERLLTIEWHQRELPEMDPSGAGKWLLISDCAASDVTATRLADAFREHSAACTTMRWPLHDDQLAAADQLRDQVGSDEFSGVVVLTGSNTGTPHQGSADRGAEYVRRLVGIARELSDLPGAVPRMYVVTRGAQRVLADDCVNLEQGGLRGLLRTIGAEHPHLRATQIDVDEQTGVEQLARQLLATSEEDETAWRDNEWYVARLCPTPLRPQERRTIVADHQQSGMRLQIRTPGDMQTIELAAFHRVPPGPGQIEVAVRASSVNFADVLIAFGRYPSFEGHLPQLGTDFAGVVTAVGPGVTDHKVGDHVGGMSPNGCWGTFVTCDARLAATLPPGLGDAQAAAVTTAHATAWYGLHELARIRAGDTVLIHSGTGGVGQAAIAIARAAGAEIFATAGTPQRRELLRNMGIEHVYDSRSIEFAEQIRRDTNGRGVDVVLNSVTGAAQLAGLKLLAFRGRFVEIGKRDIYGDTKLGLFPFRRNLSFYAVDLGLLSATHPEELRDLLGTVYRLTAAGELPMPQSTHYPLVEAATAIRVMGNAEHTGKLVLHIPQTGKSLVTLPPEQAQVFRPDGSYIITGGLGGLGLFLAEKMAAAGCGRIVLNSRTQPTQKMRETIEAIAAMGSEVVVECGDIAQPGTAERLVATAVATGLPVRGVLHAAAVVEDATLANITDELLARDWAPKVHGAWELHEATSGQPLDWFCLFSSAAALTGSPGQSAYSAANSWLDAFAHWRQAQGLPATAIAWGAWSDIGQLGWWSASPARASALEESNYTAITPDEGAYAFEALLRHNRVYTGYAPVIGAPWLVAFAERSRFFEVFSSSNGSGTSKFRVELNELPRDEWPARLRQLVAEQVSLILRRTVDPDRPLPEYGLDSLGALELRTRIETETGIRLAPKNVSATVRGLADHLYEQLAPDDAPAAALSSQ.

The region spanning 24–447 (VTPVAVIGMA…GTNVHAVVEQ (424 aa)) is the Ketosynthase family 3 (KS3) domain. The Acyl-thioester intermediate; for beta-ketoacyl synthase activity role is filled by Cys-196. Catalysis depends on for beta-ketoacyl synthase activity residues His-331 and His-367. The tract at residues 449–549 (PQTEAQPHAA…VYQPAVGQDD (101 aa)) is linker domain (LD). Residues 550-849 (RGPVWLFSGQ…VAALAGMRRE (300 aa)) form an acyltransferase (AT) region. Ser-641 serves as the catalytic Acyl-ester intermediate; for acyltransferase activity. Positions 909–1191 (STVAVHPLLG…LAVCGLRIGT (283 aa)) are dehydratase (DH). Residues 914 to 1032 (HPLLGAHVRL…RRASAVLQQV (119 aa)) form an N-terminal hotdog fold region. In terms of domain architecture, PKS/mFAS DH spans 914–1198 (HPLLGAHVRL…IGTGVSERDK (285 aa)). His-947 serves as the catalytic Proton acceptor; for dehydratase activity. Residues 1051-1198 (PCRVDGEDLR…IGTGVSERDK (148 aa)) are C-terminal hotdog fold. The active-site Proton donor; for dehydratase activity is Asp-1115. The pseudo beta-ketoacyl reductase (PsiKR) stretch occupies residues 1227-1398 (KWLLISDCAA…SEEDETAWRD (172 aa)). The segment at 1426–1750 (SGMRLQIRTP…EHTGKLVLHI (325 aa)) is enoylreductase (ER). Positions 1772-2019 (GSYIITGGLG…AERSRFFEVF (248 aa)) are beta-ketoacyl reductase (KR). NADP(+)-binding positions include 1780–1783 (LGGL), 1803–1806 (SRTQ), 1831–1832 (DI), and 1904–1905 (FS). In terms of domain architecture, Carrier spans 2040–2126 (DEWPARLRQL…DAPAAALSSQ (87 aa)). Residue Ser-2075 is modified to O-(pantetheine 4'-phosphoryl)serine.

Requires pantetheine 4'-phosphate as cofactor.

It carries out the reaction hexadecanoyl-[(hydroxy)phthioceranic acid synthase] + 7 (S)-methylmalonyl-CoA + 14 NADPH + 21 H(+) = C37-phthioceranyl-[(hydroxy)phthioceranic acid synthase] + 7 CO2 + 14 NADP(+) + 7 CoA + 7 H2O. It catalyses the reaction hexadecanoyl-[(hydroxy)phthioceranic acid synthase] + 8 (S)-methylmalonyl-CoA + 16 NADPH + 24 H(+) = C40-phthioceranyl-[(hydroxy)phthioceranic acid synthase] + 8 CO2 + 16 NADP(+) + 8 CoA + 8 H2O. In Mycobacterium bovis (strain BCG / Pasteur 1173P2), this protein is Phthioceranic/hydroxyphthioceranic acid synthase (pks2).